The primary structure comprises 214 residues: Adenylate kinase (214 aa).

An ATP-binding site is contributed by 10–15; that stretch reads GAGKGT. The interval 30–59 is NMP; it reads STGDMLRAAVKAGTPLGLEAKKVMDAGQLV. Residues threonine 31, arginine 36, 57–59, 85–88, and glutamine 92 contribute to the AMP site; these read QLV and GFPR. The tract at residues 122-159 is LID; sequence GRRVHPGSGRVYHIVFNQPKVEGKDDVTGEDLAIRPDD. ATP-binding positions include arginine 123 and 132 to 133; that span reads VY. The AMP site is built by arginine 156 and arginine 167. Residue glutamine 200 coordinates ATP.

The protein belongs to the adenylate kinase family. As to quaternary structure, monomer.

The protein resides in the cytoplasm. The enzyme catalyses AMP + ATP = 2 ADP. Its pathway is purine metabolism; AMP biosynthesis via salvage pathway; AMP from ADP: step 1/1. Its function is as follows. Catalyzes the reversible transfer of the terminal phosphate group between ATP and AMP. Plays an important role in cellular energy homeostasis and in adenine nucleotide metabolism. In Shewanella halifaxensis (strain HAW-EB4), this protein is Adenylate kinase.